The sequence spans 238 residues: 7-cyano-7-deazaguanine synthase (238 aa).

Residue 15–25 (FSGGQDSTTCL) coordinates ATP. Zn(2+) is bound by residues cysteine 203, cysteine 218, cysteine 221, and cysteine 224.

The protein belongs to the QueC family. Zn(2+) is required as a cofactor.

It catalyses the reaction 7-carboxy-7-deazaguanine + NH4(+) + ATP = 7-cyano-7-deazaguanine + ADP + phosphate + H2O + H(+). It functions in the pathway purine metabolism; 7-cyano-7-deazaguanine biosynthesis. In terms of biological role, catalyzes the ATP-dependent conversion of 7-carboxy-7-deazaguanine (CDG) to 7-cyano-7-deazaguanine (preQ(0)). The protein is 7-cyano-7-deazaguanine synthase of Alkalilimnicola ehrlichii (strain ATCC BAA-1101 / DSM 17681 / MLHE-1).